Consider the following 659-residue polypeptide: Biosynthetic arginine decarboxylase (659 aa).

Lys-128 is subject to N6-(pyridoxal phosphate)lysine. 308–318 (FDVGGGLGVDY) contributes to the substrate binding site.

The protein belongs to the Orn/Lys/Arg decarboxylase class-II family. SpeA subfamily. Mg(2+) is required as a cofactor. Pyridoxal 5'-phosphate serves as cofactor.

It catalyses the reaction L-arginine + H(+) = agmatine + CO2. The protein operates within amine and polyamine biosynthesis; agmatine biosynthesis; agmatine from L-arginine: step 1/1. Its function is as follows. Catalyzes the biosynthesis of agmatine from arginine. The sequence is that of Biosynthetic arginine decarboxylase from Yersinia pestis.